A 91-amino-acid chain; its full sequence is Elongation factor 1-beta (91 aa).

It belongs to the EF-1-beta/EF-1-delta family.

Functionally, promotes the exchange of GDP for GTP in EF-1-alpha/GDP, thus allowing the regeneration of EF-1-alpha/GTP that could then be used to form the ternary complex EF-1-alpha/GTP/AAtRNA. The protein is Elongation factor 1-beta of Thermococcus gammatolerans (strain DSM 15229 / JCM 11827 / EJ3).